Here is a 388-residue protein sequence, read N- to C-terminus: Succinate--CoA ligase [ADP-forming] subunit beta (388 aa).

Residues Lys9–Glu244 form the ATP-grasp domain. ATP-binding positions include Lys46, Gly53 to Gly55, Glu99, Ala102, and Glu107. Asn199 and Asp213 together coordinate Mg(2+). Substrate is bound by residues Asn264 and Gly321 to Met323.

The protein belongs to the succinate/malate CoA ligase beta subunit family. As to quaternary structure, heterotetramer of two alpha and two beta subunits. Mg(2+) serves as cofactor.

The enzyme catalyses succinate + ATP + CoA = succinyl-CoA + ADP + phosphate. The catalysed reaction is GTP + succinate + CoA = succinyl-CoA + GDP + phosphate. It functions in the pathway carbohydrate metabolism; tricarboxylic acid cycle; succinate from succinyl-CoA (ligase route): step 1/1. Its function is as follows. Succinyl-CoA synthetase functions in the citric acid cycle (TCA), coupling the hydrolysis of succinyl-CoA to the synthesis of either ATP or GTP and thus represents the only step of substrate-level phosphorylation in the TCA. The beta subunit provides nucleotide specificity of the enzyme and binds the substrate succinate, while the binding sites for coenzyme A and phosphate are found in the alpha subunit. The sequence is that of Succinate--CoA ligase [ADP-forming] subunit beta from Burkholderia cenocepacia (strain ATCC BAA-245 / DSM 16553 / LMG 16656 / NCTC 13227 / J2315 / CF5610) (Burkholderia cepacia (strain J2315)).